A 205-amino-acid polypeptide reads, in one-letter code: Thymidylate kinase (205 aa).

11 to 18 (GLDKSGKT) contacts ATP.

The protein belongs to the thymidylate kinase family. As to quaternary structure, homodimer; the dimer arrangement is orthogonal and not antiparallel as in human enzyme.

The enzyme catalyses dTMP + ATP = dTDP + ADP. The protein operates within pyrimidine metabolism; dTTP biosynthesis. In terms of biological role, poxvirus TMP kinase is able to phosphorylate dTMP, dUMP and also dGMP from any purine and pyrimidine nucleoside triphosphate. The large substrate specificity is explained by the presence of a canal connecting the edge of the dimer interface to the TMP base binding pocket, canal not found in the human homolog. This is Thymidylate kinase (OPG178) from Homo sapiens (Human).